The primary structure comprises 421 residues: Serine hydroxymethyltransferase (421 aa).

(6S)-5,6,7,8-tetrahydrofolate-binding positions include leucine 121 and 125-127; that span reads GHL. Lysine 230 carries the post-translational modification N6-(pyridoxal phosphate)lysine. Residue 355–357 participates in (6S)-5,6,7,8-tetrahydrofolate binding; the sequence is SPF.

It belongs to the SHMT family. In terms of assembly, homodimer. It depends on pyridoxal 5'-phosphate as a cofactor.

The protein resides in the cytoplasm. The enzyme catalyses (6R)-5,10-methylene-5,6,7,8-tetrahydrofolate + glycine + H2O = (6S)-5,6,7,8-tetrahydrofolate + L-serine. It participates in one-carbon metabolism; tetrahydrofolate interconversion. The protein operates within amino-acid biosynthesis; glycine biosynthesis; glycine from L-serine: step 1/1. Functionally, catalyzes the reversible interconversion of serine and glycine with tetrahydrofolate (THF) serving as the one-carbon carrier. This reaction serves as the major source of one-carbon groups required for the biosynthesis of purines, thymidylate, methionine, and other important biomolecules. Also exhibits THF-independent aldolase activity toward beta-hydroxyamino acids, producing glycine and aldehydes, via a retro-aldol mechanism. The protein is Serine hydroxymethyltransferase of Psychromonas ingrahamii (strain DSM 17664 / CCUG 51855 / 37).